Here is a 244-residue protein sequence, read N- to C-terminus: tRNA (guanine-N(7)-)-methyltransferase (244 aa).

Over residues 1–10 the composition is skewed to polar residues; that stretch reads MSDTPQSPAQ. Positions 1–20 are disordered; it reads MSDTPQSPAQDSLAEHDEAR. The S-adenosyl-L-methionine site is built by E74, E99, D126, and D149. The active site involves D149. Substrate is bound by residues K153, D185, and 222 to 225; that span reads TKFE.

It belongs to the class I-like SAM-binding methyltransferase superfamily. TrmB family.

The catalysed reaction is guanosine(46) in tRNA + S-adenosyl-L-methionine = N(7)-methylguanosine(46) in tRNA + S-adenosyl-L-homocysteine. Its pathway is tRNA modification; N(7)-methylguanine-tRNA biosynthesis. Functionally, catalyzes the formation of N(7)-methylguanine at position 46 (m7G46) in tRNA. This is tRNA (guanine-N(7)-)-methyltransferase from Pseudomonas paraeruginosa (strain DSM 24068 / PA7) (Pseudomonas aeruginosa (strain PA7)).